Here is a 299-residue protein sequence, read N- to C-terminus: 4-diphosphocytidyl-2-C-methyl-D-erythritol kinase (299 aa).

Lys18 is a catalytic residue. 104–114 contacts ATP; it reads PIASGIGGGSS. Asp146 is an active-site residue.

It belongs to the GHMP kinase family. IspE subfamily.

It catalyses the reaction 4-CDP-2-C-methyl-D-erythritol + ATP = 4-CDP-2-C-methyl-D-erythritol 2-phosphate + ADP + H(+). It participates in isoprenoid biosynthesis; isopentenyl diphosphate biosynthesis via DXP pathway; isopentenyl diphosphate from 1-deoxy-D-xylulose 5-phosphate: step 3/6. Its function is as follows. Catalyzes the phosphorylation of the position 2 hydroxy group of 4-diphosphocytidyl-2C-methyl-D-erythritol. This is 4-diphosphocytidyl-2-C-methyl-D-erythritol kinase from Brucella melitensis biotype 1 (strain ATCC 23456 / CCUG 17765 / NCTC 10094 / 16M).